Consider the following 420-residue polypeptide: UDP-N-acetyl-D-mannosamine dehydrogenase (420 aa).

The NAD(+) site is built by tyrosine 13, isoleucine 14, aspartate 33, threonine 85, and threonine 126. 8 residues coordinate UDP-N-acetyl-alpha-D-mannosaminouronate: arginine 160, valine 161, lysine 212, asparagine 216, arginine 219, histidine 250, arginine 252, and glycine 263. The active-site Proton donor/acceptor is the lysine 212. Cysteine 266 (nucleophile) is an active-site residue. Positions 330 and 331 each coordinate UDP-N-acetyl-alpha-D-mannosaminouronate. Arginine 338 lines the NAD(+) pocket. Residue lysine 416 coordinates UDP-N-acetyl-alpha-D-mannosaminouronate.

The protein belongs to the UDP-glucose/GDP-mannose dehydrogenase family. WecC subfamily. As to quaternary structure, homodimer.

It catalyses the reaction UDP-N-acetyl-alpha-D-mannosamine + 2 NAD(+) + H2O = UDP-N-acetyl-alpha-D-mannosaminouronate + 2 NADH + 3 H(+). Its pathway is bacterial outer membrane biogenesis; enterobacterial common antigen biosynthesis. Functionally, catalyzes the four-electron oxidation of UDP-N-acetyl-D-mannosamine (UDP-ManNAc), reducing NAD(+) and releasing UDP-N-acetylmannosaminuronic acid (UDP-ManNAcA). The polypeptide is UDP-N-acetyl-D-mannosamine dehydrogenase (Salmonella typhimurium (strain LT2 / SGSC1412 / ATCC 700720)).